We begin with the raw amino-acid sequence, 646 residues long: MAGAPLIRLEDICKTFHNGDLAVEVLHGITLDIRAGEFVAIMGASGSGKSTLMNILGCLDTPTGGRYLLDGEDVSTLNADELATLRRRTFGFVFQSYNLIPTSTAQENVEVPAIYAGTPAAERRKRAAALLNALKLGDRLDHRPSQLSGGQQQRISIARALMNGGRIILADEPTGALDSQSGEDVMELLRSMHQQGHTVIVITHAREVAERADRLIEIRDGQILSDTTKRDIHTPEATLQPHEEIAGNGAHIADISEAVKMALHALRANIFRTVLTLLGIIIGVSSVVTMLAIGTGAQNTILDRINAMGTDLILVRPAMAGFRGSGSIATLVPQDADAILELPNVKSAVPEVTGTVTLRRGNVDYQSQANGTVPAFSSEIVESRQRQLHHPERYRYLRPCGWLGTTVVKTLFPDGGNPVGDYILIQKIPFQIIGTLEPKGAGFGGSDQDDVVVVPLSTGNLRLFGQKYVRSITVQVKDSSLIDTTQNQIQSLLDQRHKKRDTMITNMSSVREDAAAMGKTMTVFLGSVAAISLLVGGIGVMNIMLVSVTERTREIGVRMATGARRRDILLQFIIEALSVSAIGGAIGVILGLGAAALASWAGLSVGYSFGPVLLAFACAFATGLIFGFLPARKASRLLPAVALSSE.

The region spanning 7 to 245 is the ABC transporter domain; it reads IRLEDICKTF…EATLQPHEEI (239 aa). Position 43-50 (43-50) interacts with ATP; that stretch reads GASGSGKS. The next 4 membrane-spanning stretches (helical) occupy residues 274-294, 528-548, 572-592, and 609-629; these read VLTL…LAIG, VAAI…LVSV, FIIE…ILGL, and FGPV…FGFL.

Belongs to the ABC transporter superfamily. Macrolide exporter (TC 3.A.1.122) family. Homodimer.

It is found in the cell inner membrane. Its function is as follows. Non-canonical ABC transporter that contains transmembrane domains (TMD), which form a pore in the inner membrane, and an ATP-binding domain (NBD), which is responsible for energy generation. Confers resistance against macrolides. This Brucella abortus (strain 2308) protein is Macrolide export ATP-binding/permease protein MacB.